The chain runs to 475 residues: Ribulose bisphosphate carboxylase large chain (475 aa).

The propeptide occupies 1 to 2; sequence MS. Pro3 carries the N-acetylproline modification. Position 14 is an N6,N6,N6-trimethyllysine (Lys14). Positions 123 and 173 each coordinate substrate. The Proton acceptor role is filled by Lys175. Lys177 serves as a coordination point for substrate. Residues Lys201, Asp203, and Glu204 each contribute to the Mg(2+) site. Lys201 is subject to N6-carboxylysine. The Proton acceptor role is filled by His294. 3 residues coordinate substrate: Arg295, His327, and Ser379.

It belongs to the RuBisCO large chain family. Type I subfamily. As to quaternary structure, heterohexadecamer of 8 large chains and 8 small chains; disulfide-linked. The disulfide link is formed within the large subunit homodimers. It depends on Mg(2+) as a cofactor. In terms of processing, the disulfide bond which can form in the large chain dimeric partners within the hexadecamer appears to be associated with oxidative stress and protein turnover.

The protein resides in the plastid. The protein localises to the chloroplast. The catalysed reaction is 2 (2R)-3-phosphoglycerate + 2 H(+) = D-ribulose 1,5-bisphosphate + CO2 + H2O. It catalyses the reaction D-ribulose 1,5-bisphosphate + O2 = 2-phosphoglycolate + (2R)-3-phosphoglycerate + 2 H(+). RuBisCO catalyzes two reactions: the carboxylation of D-ribulose 1,5-bisphosphate, the primary event in carbon dioxide fixation, as well as the oxidative fragmentation of the pentose substrate in the photorespiration process. Both reactions occur simultaneously and in competition at the same active site. The sequence is that of Ribulose bisphosphate carboxylase large chain from Gossypium hirsutum (Upland cotton).